A 477-amino-acid polypeptide reads, in one-letter code: Ribulose bisphosphate carboxylase large chain (477 aa).

The propeptide occupies 1-2 (MS). Position 3 is an N-acetylproline (Pro3). The residue at position 14 (Lys14) is an N6,N6,N6-trimethyllysine. Substrate-binding residues include Asn123 and Thr173. The active-site Proton acceptor is Lys175. Lys177 lines the substrate pocket. 3 residues coordinate Mg(2+): Lys201, Asp203, and Glu204. Lys201 bears the N6-carboxylysine mark. His294 serves as the catalytic Proton acceptor. Substrate-binding residues include Arg295, His327, and Ser379.

This sequence belongs to the RuBisCO large chain family. Type I subfamily. As to quaternary structure, heterohexadecamer of 8 large chains and 8 small chains; disulfide-linked. The disulfide link is formed within the large subunit homodimers. It depends on Mg(2+) as a cofactor. In terms of processing, the disulfide bond which can form in the large chain dimeric partners within the hexadecamer appears to be associated with oxidative stress and protein turnover.

It localises to the plastid. It is found in the chloroplast. The enzyme catalyses 2 (2R)-3-phosphoglycerate + 2 H(+) = D-ribulose 1,5-bisphosphate + CO2 + H2O. It carries out the reaction D-ribulose 1,5-bisphosphate + O2 = 2-phosphoglycolate + (2R)-3-phosphoglycerate + 2 H(+). In terms of biological role, ruBisCO catalyzes two reactions: the carboxylation of D-ribulose 1,5-bisphosphate, the primary event in carbon dioxide fixation, as well as the oxidative fragmentation of the pentose substrate in the photorespiration process. Both reactions occur simultaneously and in competition at the same active site. This chain is Ribulose bisphosphate carboxylase large chain, found in Oryza nivara (Indian wild rice).